The primary structure comprises 405 residues: Glutathione S-transferase LANCL1 (405 aa).

Cysteine 282 is a binding site for Zn(2+). A glutathione-binding site is contributed by lysine 323. Cysteine 328 and histidine 329 together coordinate Zn(2+). 370–373 (RTPD) contacts glutathione.

Belongs to the LanC-like protein family.

It localises to the cytoplasm. It is found in the cell membrane. It catalyses the reaction RX + glutathione = an S-substituted glutathione + a halide anion + H(+). The catalysed reaction is 1-chloro-2,4-dinitrobenzene + glutathione = 2,4-dinitrophenyl-S-glutathione + chloride + H(+). Its function is as follows. Functions as a glutathione transferase. Catalyzes conjugation of the glutathione (GSH) to artificial substrates 1-chloro-2,4-dinitrobenzene (CDNB) and p-nitrophenyl acetate. Binds glutathione. The polypeptide is Glutathione S-transferase LANCL1 (Danio rerio (Zebrafish)).